A 291-amino-acid polypeptide reads, in one-letter code: 2-C-methyl-D-erythritol 4-phosphate cytidylyltransferase (291 aa).

The segment at 1–23 (MTERDFDTPVETPTVQPAPAQGT) is disordered.

The protein belongs to the IspD/TarI cytidylyltransferase family. IspD subfamily.

It carries out the reaction 2-C-methyl-D-erythritol 4-phosphate + CTP + H(+) = 4-CDP-2-C-methyl-D-erythritol + diphosphate. It participates in isoprenoid biosynthesis; isopentenyl diphosphate biosynthesis via DXP pathway; isopentenyl diphosphate from 1-deoxy-D-xylulose 5-phosphate: step 2/6. Catalyzes the formation of 4-diphosphocytidyl-2-C-methyl-D-erythritol from CTP and 2-C-methyl-D-erythritol 4-phosphate (MEP). In Bifidobacterium longum subsp. infantis (strain ATCC 15697 / DSM 20088 / JCM 1222 / NCTC 11817 / S12), this protein is 2-C-methyl-D-erythritol 4-phosphate cytidylyltransferase.